Consider the following 431-residue polypeptide: Adenylosuccinate synthetase (431 aa).

GTP is bound by residues 12–18 (GDEGKGK) and 40–42 (GHT). Asp13 acts as the Proton acceptor in catalysis. Mg(2+) is bound by residues Asp13 and Gly40. Residues 13–16 (DEGK), 38–41 (NAGH), Thr130, Arg144, Gln225, Thr240, and Arg304 each bind IMP. His41 functions as the Proton donor in the catalytic mechanism. 300 to 306 (ATTGRPR) provides a ligand contact to substrate. GTP contacts are provided by residues Arg306, 332–334 (KLD), and 414–416 (SVG).

The protein belongs to the adenylosuccinate synthetase family. In terms of assembly, homodimer. Requires Mg(2+) as cofactor.

Its subcellular location is the cytoplasm. It catalyses the reaction IMP + L-aspartate + GTP = N(6)-(1,2-dicarboxyethyl)-AMP + GDP + phosphate + 2 H(+). The protein operates within purine metabolism; AMP biosynthesis via de novo pathway; AMP from IMP: step 1/2. Functionally, plays an important role in the de novo pathway of purine nucleotide biosynthesis. Catalyzes the first committed step in the biosynthesis of AMP from IMP. In Geotalea daltonii (strain DSM 22248 / JCM 15807 / FRC-32) (Geobacter daltonii), this protein is Adenylosuccinate synthetase.